Reading from the N-terminus, the 170-residue chain is Thialysine N-epsilon-acetyltransferase (170 aa).

The region spanning 4-166 (VLIREAKEGD…FRFEGEAMRE (163 aa)) is the N-acetyltransferase domain. 27 to 28 (YE) serves as a coordination point for substrate. Residue K29 is modified to N6-acetyllysine. E92 provides a ligand contact to substrate. Acetyl-CoA is bound by residues 94–96 (IYV), 102–107 (GQGIGS), 133–135 (NKK), and Y140. The active-site Proton donor is Y140. A substrate-binding site is contributed by E152.

This sequence belongs to the acetyltransferase family. Homodimer.

The protein resides in the cytoplasm. It carries out the reaction S-(2-aminoethyl)-L-cysteine + acetyl-CoA = S-(2-acetamidoethyl)-L-cysteine + CoA + H(+). The catalysed reaction is an alkane-alpha,omega-diamine + acetyl-CoA = an N-acetylalkane-alpha,omega-diamine + CoA + H(+). Its function is as follows. Catalyzes the N-acetylation of the amino acid thialysine (S-(2-aminoethyl)-L-cysteine), a L-lysine analog with the 4-methylene group substituted with a sulfur. May also catalyze acetylation of polyamines, such as norspermidine, spermidine or spermine. However, ability to acetylate polyamines is weak, suggesting that it does not act as a diamine acetyltransferase in vivo. The chain is Thialysine N-epsilon-acetyltransferase from Sus scrofa (Pig).